Reading from the N-terminus, the 525-residue chain is Beta-1,4-xylosyltransferase IRX14 (525 aa).

Over 1 to 35 the chain is Cytoplasmic; that stretch reads MKLSALHQSYLNRRSNSFRSPTSLDSSVDGSGKSL. The chain crosses the membrane as a helical; Signal-anchor for type II membrane protein span at residues 36–56; sequence IAVFWLILHCLCCLISLVLGF. The Lumenal segment spans residues 57–525; the sequence is RFSRLVFFFL…SSSSKHQERN (469 aa). Residues Asn-102, Asn-204, and Asn-326 are each glycosylated (N-linked (GlcNAc...) asparagine). A disordered region spans residues 452 to 525; the sequence is RTPWPDVPPE…SSSSKHQERN (74 aa). The segment covering 471–488 has biased composition (polar residues); the sequence is PLSQGNTVVVIPKQQQHP. A compositionally biased stretch (basic residues) spans 489 to 503; sequence TKIRKPKRKSKKSKH. The span at 508-519 shows a compositional bias: polar residues; sequence TDTTTQVYSSSS.

The protein belongs to the glycosyltransferase 43 family. As to expression, expressed in developing interfascicular fibers and xylem cells in stems and developing secondary xylem in roots.

Its subcellular location is the golgi apparatus membrane. It catalyses the reaction [(1-&gt;4)-beta-D-xylan](n) + UDP-alpha-D-xylose = [(1-&gt;4)-beta-D-xylan](n+1) + UDP + H(+). In terms of biological role, involved in the synthesis of the hemicellulose glucuronoxylan, a major component of secondary cell walls. Involved in the elongation of glucuronoxylan xylosyl backbone. Xylan xylosyltransferase that acts cooperatively with IRX9 to achieve the successive addition of xylosyl residues during xylan backbone elongation. Required for the proper composition and structural properties of released seed coat mucilage. Required for the production of highly branched xylan polymers in seed coat mucilage. Xylan with xylose side chains seems to be necessary for pectin attachment to the seed surface. Together with MUCI70, required for xylan and pectin synthesis in seed coat epidermal (SCE) cells. This Arabidopsis thaliana (Mouse-ear cress) protein is Beta-1,4-xylosyltransferase IRX14.